We begin with the raw amino-acid sequence, 204 residues long: Inner membrane-spanning protein YciB (204 aa).

A run of 5 helical transmembrane segments spans residues 48–68, 73–93, 102–122, 147–167, and 170–190; these read ILFA…LYFF, FESM…ATLM, WKPT…QLFT, GAWI…AYAF, and AVWV…FVVG.

It belongs to the YciB family.

The protein resides in the cell inner membrane. Plays a role in cell envelope biogenesis, maintenance of cell envelope integrity and membrane homeostasis. The sequence is that of Inner membrane-spanning protein YciB from Nitrosococcus oceani (strain ATCC 19707 / BCRC 17464 / JCM 30415 / NCIMB 11848 / C-107).